The sequence spans 147 residues: Phosphoribosyl-AMP cyclohydrolase (147 aa).

Asp97 is a binding site for Mg(2+). Zn(2+) is bound at residue Cys98. The Mg(2+) site is built by Asp99 and Asp101. Zn(2+) contacts are provided by Cys114 and Cys121.

It belongs to the PRA-CH family. As to quaternary structure, homodimer. The cofactor is Mg(2+). Zn(2+) serves as cofactor.

It is found in the cytoplasm. The enzyme catalyses 1-(5-phospho-beta-D-ribosyl)-5'-AMP + H2O = 1-(5-phospho-beta-D-ribosyl)-5-[(5-phospho-beta-D-ribosylamino)methylideneamino]imidazole-4-carboxamide. Its pathway is amino-acid biosynthesis; L-histidine biosynthesis; L-histidine from 5-phospho-alpha-D-ribose 1-diphosphate: step 3/9. Its function is as follows. Catalyzes the hydrolysis of the adenine ring of phosphoribosyl-AMP. In Hydrogenovibrio crunogenus (strain DSM 25203 / XCL-2) (Thiomicrospira crunogena), this protein is Phosphoribosyl-AMP cyclohydrolase.